The primary structure comprises 720 residues: Neurochondrin (720 aa).

Belongs to the neurochondrin family.

It localises to the cytoplasm. Its subcellular location is the cytosol. The protein localises to the cell projection. It is found in the dendrite. The protein resides in the postsynapse. In terms of biological role, probably involved in signal transduction, in the nervous system. Required for the spatial learning process. May also be involved in neurite outgrowth. The sequence is that of Neurochondrin (ncdn) from Xenopus laevis (African clawed frog).